Here is a 121-residue protein sequence, read N- to C-terminus: Phosphoribosyl-ATP pyrophosphatase (121 aa).

The protein belongs to the PRA-PH family.

Its subcellular location is the cytoplasm. It carries out the reaction 1-(5-phospho-beta-D-ribosyl)-ATP + H2O = 1-(5-phospho-beta-D-ribosyl)-5'-AMP + diphosphate + H(+). The protein operates within amino-acid biosynthesis; L-histidine biosynthesis; L-histidine from 5-phospho-alpha-D-ribose 1-diphosphate: step 2/9. This is Phosphoribosyl-ATP pyrophosphatase from Burkholderia ambifaria (strain MC40-6).